A 131-amino-acid chain; its full sequence is Protein ApaG (131 aa).

One can recognise an ApaG domain in the interval 7-131 (PVKPYDLTVS…FLLAMPRTLH (125 aa)).

This Bordetella bronchiseptica (strain ATCC BAA-588 / NCTC 13252 / RB50) (Alcaligenes bronchisepticus) protein is Protein ApaG.